The chain runs to 451 residues: Plasmepsin III (451 aa).

The Cytoplasmic segment spans residues 1 to 37; it reads MNLTIKEEDFTNTFMKNEESFNTFRVTKVKRWNAKRL. Positions 1–123 are excised as a propeptide; that stretch reads MNLTIKEEDF…KGLTKKSYLG (123 aa). Residues 38 to 58 traverse the membrane as a helical; Signal-anchor for type II membrane protein segment; it reads FKILFVTVFIVLAGGFSYYIF. Topologically, residues 59–451 are lumenal; that stretch reads ENFVFQKNRK…TVGFALAKNL (393 aa). The region spanning 139–446 is the Peptidase A1 domain; it reads SFGEAKLGDN…DYDNHTVGFA (308 aa). Intrachain disulfides connect Cys170–Cys175 and Cys372–Cys408.

This sequence belongs to the peptidase A1 family. In terms of assembly, probable homodimer; in the zymogen form. Monomer; in the active form. Acidification disrupts homodimerization. Component of the hemozoin formation complex (HFC) composed of falcipains FP2A and/or FP2B, plasmepsins PMII, PMIII/HAP and PMIV, heme detoxifying protein HDP and falcilysin FLN. The HFC complex is involved in hemoglobin degradation and detoxification of heme in the food vacuole during the asexual blood stage. Proteolytically cleaved into the soluble active mature form by cysteine proteases in the digestive vacuole of trophozoites. Proteolysis requires an acidic environment. Transprocessing may serve as an alternate activation system.

The protein localises to the membrane. It is found in the vacuole lumen. The enzyme catalyses Hydrolysis of the bonds linking certain hydrophobic residues in hemoglobin or globin. Also cleaves small molecules substrates such as Ala-Leu-Glu-Arg-Thr-Phe-|-Phe(NO2)-Ser-Phe-Pro-Thr.. Dimerization causes loss of catalytic activity. Inhibited by pepstatin A. Inhibited by Zn(2+). Functionally, during the asexual blood stage, catalyzes the cleavage of denatured host hemoglobin (Hb) or globins. Digestion of host Hb is an essential step which provides the parasite with amino acids for protein synthesis, and regulates osmolarity. The polypeptide is Plasmepsin III (Plasmodium falciparum (isolate 3D7)).